Consider the following 243-residue polypeptide: Flavin-dependent thymidylate synthase (243 aa).

In terms of domain architecture, ThyX spans 2–207; that stretch reads VKVKLINYTP…ELKPIIEWAK (206 aa). FAD is bound by residues serine 56, 80-82, and glutamine 88; that span reads RHR. DUMP contacts are provided by residues 77–80, 88–92, and arginine 146; these read QLVR and QQSQR. The ThyX motif signature appears at 80–90; that stretch reads RHRIASYTQQS. FAD contacts are provided by residues 162–164 and histidine 168; that span reads NLR. Arginine 173 contributes to the dUMP binding site. Arginine 173 (involved in ionization of N3 of dUMP, leading to its activation) is an active-site residue.

It belongs to the thymidylate synthase ThyX family. In terms of assembly, homotetramer. Requires FAD as cofactor.

It carries out the reaction dUMP + (6R)-5,10-methylene-5,6,7,8-tetrahydrofolate + NADPH + H(+) = dTMP + (6S)-5,6,7,8-tetrahydrofolate + NADP(+). It functions in the pathway pyrimidine metabolism; dTTP biosynthesis. Catalyzes the reductive methylation of 2'-deoxyuridine-5'-monophosphate (dUMP) to 2'-deoxythymidine-5'-monophosphate (dTMP) while utilizing 5,10-methylenetetrahydrofolate (mTHF) as the methyl donor, and NADPH and FADH(2) as the reductant. This Pyrococcus horikoshii (strain ATCC 700860 / DSM 12428 / JCM 9974 / NBRC 100139 / OT-3) protein is Flavin-dependent thymidylate synthase.